The primary structure comprises 197 residues: Nucleoid occlusion factor SlmA (197 aa).

Residues 7–67 form the HTH tetR-type domain; the sequence is INRREHILQC…GLIEFIEESL (61 aa). Residues 30-49 constitute a DNA-binding region (H-T-H motif); that stretch reads TTAKLAAEVGVSEAALYRHF. Residues 109-136 adopt a coiled-coil conformation; that stretch reads DALLGENERLRSRISQLFAKIETHLKQI.

The protein belongs to the nucleoid occlusion factor SlmA family. In terms of assembly, homodimer. Interacts with FtsZ.

It localises to the cytoplasm. The protein resides in the nucleoid. Required for nucleoid occlusion (NO) phenomenon, which prevents Z-ring formation and cell division over the nucleoid. Acts as a DNA-associated cell division inhibitor that binds simultaneously chromosomal DNA and FtsZ, and disrupts the assembly of FtsZ polymers. SlmA-DNA-binding sequences (SBS) are dispersed on non-Ter regions of the chromosome, preventing FtsZ polymerization at these regions. The sequence is that of Nucleoid occlusion factor SlmA from Shewanella halifaxensis (strain HAW-EB4).